Consider the following 1158-residue polypeptide: MINVITGRQVDNLQNEIIDQAVKSYYQDKRHDVFIIVPNHIKFTTEVRALSKLSVLTNKKQVAVNKLHILSFSRLAWYFLRDEAIKLPQILDDAASVMLLEQIVKDHQDELKLFQNQTQVTSGALRQMYEAILSVRAGNIELDNIDEKKLNEETSYKIHDLRIIYDEFIERLSEKFATKDEMQLLLNQFLAKSNNLSTMEFYFSDFSHFSLQELTSVRLISKKAKNTTLAFKTKIGKIDNNAEPGDYDYVVQRTIGQLEHFWQNQQLDYQTQEYPLTQTSPSSLLNGVWTKTSGFDERLSKFLQPVKADSRYAEAYFVARTIYQQVALNNYRYQDFLVLAPNLSEYETYLTPILRQNQIPFFNDLQREMKYHPLVVAVENLQQIFKRGFQTDNVIALMKTQLFIPDWYKNSARYQNDVDLLENFVLAHGIKGKLWTKSLKSFVDADVIALDKSEKEVEDLDRLRDYFIDALTKFFEQLDKEEDPQAGVTVFWNFLIKNRVAKRLESWRKEANDTGDLQLAQQPEQVWSTLTDLLKDYLLVANKFSVDQFFDLLISGFSEANFSQIPSTLDAVNISELGMVQGQGYKQVFIIGATSTNLPQIEKIPGFFSSENLEQLNEGNEANGYLEDQQKINNLDQNYQFGNALSLASDKIYISYPVINTANEQLEPSIFYKQLLKLTRADEFAQHDLPQNNGEVLTFITNPEASLGYLTYLKNKAATDVDSLLKMTEEKIGEVAKNVLEGSSFKNIPQDLSPELAQQLYGDRIETSVSQLETYYQNSFEYFLNYGLHLKKRFENELDVIQAGNYYHETFDYLVKRIKEKKLNFADLTEEKLGELLIEVREELKEKGRYRQLLNDPFNKYLFHKLDQTTANVAHYWHSNVNKTTFRPQYSELSFGKNQKVSGLSYSWKDDNNKKKIVDLRGKMDRVDLAQVNDRVLGEVIDYKSSAKKFDLGLFANGISMQMISYLEVLKNNNKFFAQGKDLDVLGAFYQNITSSLERLSSEKMILSNYQIKDLAKESTKKLMYNGILIADEEMLDLIEPGMEKDRAVSDLYTSVKRKVNGYISWPQNQSFTPDQLDLLLAYNSYLIKNAGNEILSGKIELDPYSYGQQTSLTYSDFKDIFFFDAMLKENNYHKIKSIDKKTLLTLIREKLDLDGEE.

The protein belongs to the helicase family. AddB/RexB type 2 subfamily. In terms of assembly, heterodimer of AddA and RexB. The cofactor is Mg(2+).

The heterodimer acts as both an ATP-dependent DNA helicase and an ATP-dependent, dual-direction single-stranded exonuclease. Recognizes the chi site generating a DNA molecule suitable for the initiation of homologous recombination. This subunit has 5' -&gt; 3' nuclease activity but not helicase activity. The protein is ATP-dependent helicase/deoxyribonuclease subunit B of Lactobacillus johnsonii (strain CNCM I-12250 / La1 / NCC 533).